The following is a 201-amino-acid chain: MAGAPGGGELGPAAGEPLLQRPDSGQGSPEPPAHGKPQQGFLSSLFTRDQSCPLMLQKTLDTNPYVKLLLDAMKHSGCAVNRGRHFSCEVCDGNVSGGFDASTSQIVLCENNIRNQAHMGRVVTHELIHAFDHCRAHVHWFTNIRHLACSEIRAASLSGDCSLVNELFRLRFGLKQHHQIETSCVSRPAMNSQSCLGLVSA.

The span at 1–10 (MAGAPGGGEL) shows a compositional bias: gly residues. The interval 1-40 (MAGAPGGGELGPAAGEPLLQRPDSGQGSPEPPAHGKPQQG) is disordered. Residue His-125 coordinates a divalent metal cation. Glu-126 is a catalytic residue. Position 129 (His-129) interacts with a divalent metal cation.

This sequence belongs to the peptidase M76 family. In terms of assembly, interacts with XRCC6.

The protein is Mitochondrial inner membrane protease ATP23 homolog (Atp23) of Mus musculus (Mouse).